A 322-amino-acid polypeptide reads, in one-letter code: Sideroflexin-1 (322 aa).

The residue at position 2 (serine 2) is an N-acetylserine. Over 2–102 the chain is Mitochondrial matrix; sequence SGELPPNINI…MSAQVPMNMT (101 aa). A helical transmembrane segment spans residues 103–120; sequence ITGCMMTFYRTTPAVLFW. Residues 121–146 are Mitochondrial intermembrane-facing; sequence QWVNQSFNAVVNYTNRSGDAPLTVNE. Residues 147-167 traverse the membrane as a helical segment; sequence LGTAYVSATTGAVATALGLNA. At 168-174 the chain is on the mitochondrial matrix side; the sequence is LTKRVSP. Residues 175-195 traverse the membrane as a helical segment; sequence LVGRFVPFAAVAAANCINIPL. The Mitochondrial intermembrane segment spans residues 196–228; it reads MRQRELKVGIPVTDENGNRLGESASAAKQAITQ. A helical transmembrane segment spans residues 229-249; sequence VVVSRILMAAPGMAIPPFIMN. The Mitochondrial matrix segment spans residues 250 to 266; the sequence is TLEKKAFLKRFPWMSAP. A helical transmembrane segment spans residues 267-287; the sequence is VQVGIVGFCLVFATPLCCALF. The Mitochondrial intermembrane segment spans residues 288–322; the sequence is PQKSSMSVTSLEAELQARIRETYPELRRVYFNKGL.

Belongs to the sideroflexin family.

The protein resides in the mitochondrion inner membrane. The catalysed reaction is L-serine(in) = L-serine(out). It catalyses the reaction L-alanine(in) = L-alanine(out). The enzyme catalyses L-cysteine(in) = L-cysteine(out). Amino acid transporter importing serine, an essential substrate of the mitochondrial branch of the one-carbon pathway, into mitochondria. Mitochondrial serine is then converted to glycine and formate, which exits to the cytosol where it is used to generate the charged folates that serve as one-carbon donors. May also transport other amino acids including alanine and cysteine. This Ovis aries (Sheep) protein is Sideroflexin-1 (SFXN1).